The chain runs to 63 residues: Large ribosomal subunit protein uL29 (63 aa).

The protein belongs to the universal ribosomal protein uL29 family.

In Edwardsiella ictaluri (strain 93-146), this protein is Large ribosomal subunit protein uL29.